The following is a 510-amino-acid chain: MIWHVQNENFILDSTRIFMKAFHLLLFHGSFIFPECILIFGLILLLMIDSTSDQKDRPWFYFISSTSLVMSITALLFRWKEEPIISFSGNFQTNNFNEIFQFLILLCSTLCIPLSVEYIECTEMAITEFLLFVLTATLGGMFLCGANDXITIFVAPECFSLCSYLLSGYTKRDVRSNEATTKYLLMGGASSSILVHGFSWLYGSSGGEIELQEIVNGLINTQMYNSPGISIALISITVGIGFKLSPAPFHQWTPDVYEGSPTPVVAFLSVTSKVAASASATRIFDIPFYFSSNEWHLLLEILAILSMILGNLIAITQTSMKRMLAYSSIGQIGYVIIGIIVGDSNDGYASMITYMLFYISMNLGTFARIVSFGLRTGTDNIRDYAGLYTKDPFLALSSALCLLSLGGLPPLAGFFGKLHLFWCGWQAGLYFLVSIGLLTSVVSIYYYLKIIKLLMTGRNQEITPHVRNYRRSPLKSNNSIEWSMTVCVIAXTIPGISMNPILAIAQDTLF.

13 helical membrane passes run 24–44 (LLLFHGSFIFPECILIFGLIL), 59–79 (WFYFISSTSLVMSITALLFRW), 99–119 (IFQFLILLCSTLCIPLSVEYI), 124–144 (MAITEFLLFVLTATLGGMFLC), 149–169 (XITIFVAPECFSLCSYLLSGY), 183–203 (YLLMGGASSSILVHGFSWLYG), 229–249 (ISIALISITVGIGFKLSPAPF), 295–315 (WHLLLEILAILSMILGNLIAI), 323–343 (MLAYSSIGQIGYVIIGIIVGD), 347–367 (GYASMITYMLFYISMNLGTFA), 395–415 (ALSSALCLLSLGGLPPLAGFF), 418–438 (LHLFWCGWQAGLYFLVSIGLL), and 484–504 (MTVCVIAXTIPGISMNPILAI).

Belongs to the complex I subunit 2 family. NDH is composed of at least 16 different subunits, 5 of which are encoded in the nucleus.

The protein resides in the plastid. It is found in the chloroplast thylakoid membrane. The catalysed reaction is a plastoquinone + NADH + (n+1) H(+)(in) = a plastoquinol + NAD(+) + n H(+)(out). It catalyses the reaction a plastoquinone + NADPH + (n+1) H(+)(in) = a plastoquinol + NADP(+) + n H(+)(out). Its function is as follows. NDH shuttles electrons from NAD(P)H:plastoquinone, via FMN and iron-sulfur (Fe-S) centers, to quinones in the photosynthetic chain and possibly in a chloroplast respiratory chain. The immediate electron acceptor for the enzyme in this species is believed to be plastoquinone. Couples the redox reaction to proton translocation, and thus conserves the redox energy in a proton gradient. The protein is NAD(P)H-quinone oxidoreductase subunit 2, chloroplastic of Narcissus elegans (Daffodil).